Here is a 39-residue protein sequence, read N- to C-terminus: Cytochrome b559 subunit beta (39 aa).

Residues 14–30 traverse the membrane as a helical segment; the sequence is WLAVHGLAVPTVSFLGS. Histidine 18 provides a ligand contact to heme.

It belongs to the PsbE/PsbF family. As to quaternary structure, heterodimer of an alpha subunit and a beta subunit. PSII is composed of 1 copy each of membrane proteins PsbA, PsbB, PsbC, PsbD, PsbE, PsbF, PsbH, PsbI, PsbJ, PsbK, PsbL, PsbM, PsbT, PsbX, PsbY, PsbZ, Psb30/Ycf12, at least 3 peripheral proteins of the oxygen-evolving complex and a large number of cofactors. It forms dimeric complexes. Heme b is required as a cofactor.

It is found in the plastid. It localises to the chloroplast thylakoid membrane. Its function is as follows. This b-type cytochrome is tightly associated with the reaction center of photosystem II (PSII). PSII is a light-driven water:plastoquinone oxidoreductase that uses light energy to abstract electrons from H(2)O, generating O(2) and a proton gradient subsequently used for ATP formation. It consists of a core antenna complex that captures photons, and an electron transfer chain that converts photonic excitation into a charge separation. The sequence is that of Cytochrome b559 subunit beta from Lotus japonicus (Lotus corniculatus var. japonicus).